A 518-amino-acid chain; its full sequence is Protein nucleotidyltransferase YdiU (518 aa).

ATP is bound by residues Gly-100, Gly-102, Arg-103, Lys-123, Asp-135, Gly-136, Arg-193, and Arg-200. Catalysis depends on Asp-270, which acts as the Proton acceptor. Mg(2+)-binding residues include Asn-271 and Asp-280. Asp-280 is an ATP binding site.

It belongs to the SELO family. Mg(2+) is required as a cofactor. Mn(2+) serves as cofactor.

The catalysed reaction is L-seryl-[protein] + ATP = 3-O-(5'-adenylyl)-L-seryl-[protein] + diphosphate. It catalyses the reaction L-threonyl-[protein] + ATP = 3-O-(5'-adenylyl)-L-threonyl-[protein] + diphosphate. The enzyme catalyses L-tyrosyl-[protein] + ATP = O-(5'-adenylyl)-L-tyrosyl-[protein] + diphosphate. It carries out the reaction L-histidyl-[protein] + UTP = N(tele)-(5'-uridylyl)-L-histidyl-[protein] + diphosphate. The catalysed reaction is L-seryl-[protein] + UTP = O-(5'-uridylyl)-L-seryl-[protein] + diphosphate. It catalyses the reaction L-tyrosyl-[protein] + UTP = O-(5'-uridylyl)-L-tyrosyl-[protein] + diphosphate. Nucleotidyltransferase involved in the post-translational modification of proteins. It can catalyze the addition of adenosine monophosphate (AMP) or uridine monophosphate (UMP) to a protein, resulting in modifications known as AMPylation and UMPylation. The polypeptide is Protein nucleotidyltransferase YdiU (Xanthomonas oryzae pv. oryzae (strain MAFF 311018)).